The sequence spans 122 residues: Ribonuclease P protein component (122 aa).

Belongs to the RnpA family. Consists of a catalytic RNA component (M1 or rnpB) and a protein subunit.

It carries out the reaction Endonucleolytic cleavage of RNA, removing 5'-extranucleotides from tRNA precursor.. RNaseP catalyzes the removal of the 5'-leader sequence from pre-tRNA to produce the mature 5'-terminus. It can also cleave other RNA substrates such as 4.5S RNA. The protein component plays an auxiliary but essential role in vivo by binding to the 5'-leader sequence and broadening the substrate specificity of the ribozyme. The chain is Ribonuclease P protein component from Oenococcus oeni (strain ATCC BAA-331 / PSU-1).